Reading from the N-terminus, the 155-residue chain is Ribosome maturation factor RimP (155 aa).

Belongs to the RimP family.

It is found in the cytoplasm. In terms of biological role, required for maturation of 30S ribosomal subunits. The polypeptide is Ribosome maturation factor RimP (Parasynechococcus marenigrum (strain WH8102)).